We begin with the raw amino-acid sequence, 2126 residues long: Phthioceranic/hydroxyphthioceranic acid synthase (2126 aa).

One can recognise a Ketosynthase family 3 (KS3) domain in the interval 24–447 (VTPVAVIGMA…GTNVHAVVEQ (424 aa)). Cysteine 196 acts as the Acyl-thioester intermediate; for beta-ketoacyl synthase activity in catalysis. Active-site for beta-ketoacyl synthase activity residues include histidine 331 and histidine 367. The linker domain (LD) stretch occupies residues 449–549 (PQTEAQPHAA…VYQPAVGQDD (101 aa)). An acyltransferase (AT) region spans residues 550 to 849 (RGPVWLFSGQ…VAALAGMRRE (300 aa)). Residue serine 641 is the Acyl-ester intermediate; for acyltransferase activity of the active site. The segment at 909–1191 (STVAVHPLLG…LAVCGLRIGT (283 aa)) is dehydratase (DH). Residues 914–1032 (HPLLGAHVRL…RRASAVLQQV (119 aa)) form an N-terminal hotdog fold region. In terms of domain architecture, PKS/mFAS DH spans 914-1198 (HPLLGAHVRL…IGTGVSERDK (285 aa)). The Proton acceptor; for dehydratase activity role is filled by histidine 947. The tract at residues 1051 to 1198 (PCRVDGEDLR…IGTGVSERDK (148 aa)) is C-terminal hotdog fold. The Proton donor; for dehydratase activity role is filled by aspartate 1115. The segment at 1227 to 1398 (KWLLISDCAA…SEEDETAWRD (172 aa)) is pseudo beta-ketoacyl reductase (PsiKR). Residues 1426–1750 (SGMRLQIRTP…EHTGKLVLHI (325 aa)) are enoylreductase (ER). Residues 1772 to 2019 (GSYIITGGLG…AERSRFFEVF (248 aa)) form a beta-ketoacyl reductase (KR) region. NADP(+)-binding positions include 1780–1783 (LGGL), 1803–1806 (SRTQ), 1831–1832 (DI), and 1904–1905 (FS). Positions 2040 to 2126 (DEWPARLRQL…DAPAAALSSQ (87 aa)) constitute a Carrier domain. Serine 2075 bears the O-(pantetheine 4'-phosphoryl)serine mark.

It depends on pantetheine 4'-phosphate as a cofactor.

The catalysed reaction is hexadecanoyl-[(hydroxy)phthioceranic acid synthase] + 7 (S)-methylmalonyl-CoA + 14 NADPH + 21 H(+) = C37-phthioceranyl-[(hydroxy)phthioceranic acid synthase] + 7 CO2 + 14 NADP(+) + 7 CoA + 7 H2O. The enzyme catalyses hexadecanoyl-[(hydroxy)phthioceranic acid synthase] + 8 (S)-methylmalonyl-CoA + 16 NADPH + 24 H(+) = C40-phthioceranyl-[(hydroxy)phthioceranic acid synthase] + 8 CO2 + 16 NADP(+) + 8 CoA + 8 H2O. The sequence is that of Phthioceranic/hydroxyphthioceranic acid synthase (pks2) from Mycobacterium bovis (strain BCG / Pasteur 1173P2).